The sequence spans 262 residues: Cytochrome c oxidase subunit 2 (262 aa).

The next 2 membrane-spanning stretches (helical) occupy residues 31 to 51 (HIMF…YVII) and 72 to 92 (IIWT…SFIL). Cu cation-binding residues include His-175, Cys-210, Glu-212, Cys-214, His-218, and Met-221. Residue Glu-212 participates in Mg(2+) binding.

The protein belongs to the cytochrome c oxidase subunit 2 family. Component of the cytochrome c oxidase (complex IV, CIV), a multisubunit enzyme composed of a catalytic core of 3 subunits and several supernumerary subunits. The complex exists as a monomer or a dimer and forms supercomplexes (SCs) in the inner mitochondrial membrane with ubiquinol-cytochrome c oxidoreductase (cytochrome b-c1 complex, complex III, CIII). Cu cation serves as cofactor.

The protein resides in the mitochondrion inner membrane. The enzyme catalyses 4 Fe(II)-[cytochrome c] + O2 + 8 H(+)(in) = 4 Fe(III)-[cytochrome c] + 2 H2O + 4 H(+)(out). Functionally, component of the cytochrome c oxidase, the last enzyme in the mitochondrial electron transport chain which drives oxidative phosphorylation. The respiratory chain contains 3 multisubunit complexes succinate dehydrogenase (complex II, CII), ubiquinol-cytochrome c oxidoreductase (cytochrome b-c1 complex, complex III, CIII) and cytochrome c oxidase (complex IV, CIV), that cooperate to transfer electrons derived from NADH and succinate to molecular oxygen, creating an electrochemical gradient over the inner membrane that drives transmembrane transport and the ATP synthase. Cytochrome c oxidase is the component of the respiratory chain that catalyzes the reduction of oxygen to water. Electrons originating from reduced cytochrome c in the intermembrane space (IMS) are transferred via the dinuclear copper A center (CU(A)) of subunit 2 and heme A of subunit 1 to the active site in subunit 1, a binuclear center (BNC) formed by heme A3 and copper B (CU(B)). The BNC reduces molecular oxygen to 2 water molecules using 4 electrons from cytochrome c in the IMS and 4 protons from the mitochondrial matrix. In Candida albicans (strain SC5314 / ATCC MYA-2876) (Yeast), this protein is Cytochrome c oxidase subunit 2 (COX2).